A 135-amino-acid polypeptide reads, in one-letter code: Aspartate 1-decarboxylase (135 aa).

Ser25 (schiff-base intermediate with substrate; via pyruvic acid) is an active-site residue. A Pyruvic acid (Ser) modification is found at Ser25. Substrate is bound at residue Thr57. The Proton donor role is filled by Tyr58. 73–75 (GAA) serves as a coordination point for substrate.

This sequence belongs to the PanD family. In terms of assembly, heterooctamer of four alpha and four beta subunits. The cofactor is pyruvate. Post-translationally, is synthesized initially as an inactive proenzyme, which is activated by self-cleavage at a specific serine bond to produce a beta-subunit with a hydroxyl group at its C-terminus and an alpha-subunit with a pyruvoyl group at its N-terminus.

The protein localises to the cytoplasm. It catalyses the reaction L-aspartate + H(+) = beta-alanine + CO2. It functions in the pathway cofactor biosynthesis; (R)-pantothenate biosynthesis; beta-alanine from L-aspartate: step 1/1. Its function is as follows. Catalyzes the pyruvoyl-dependent decarboxylation of aspartate to produce beta-alanine. This Mycobacterium sp. (strain JLS) protein is Aspartate 1-decarboxylase.